Reading from the N-terminus, the 208-residue chain is Translation initiation factor 6 (208 aa).

Belongs to the eIF-6 family.

In terms of biological role, binds to the 50S ribosomal subunit and prevents its association with the 30S ribosomal subunit to form the 70S initiation complex. The chain is Translation initiation factor 6 (eif6) from Nanoarchaeum equitans (strain Kin4-M).